A 402-amino-acid chain; its full sequence is Iripin-8 (402 aa).

An N-terminal signal peptide occupies residues 1-16 (MTRLLWLFAAITASLA). N164 and N230 each carry an N-linked (GlcNAc...) asparagine glycan.

The protein belongs to the serpin family. In terms of assembly, interacts with host thrombin/F2. Interacts with host coagulation factor VII/F7 (activated). Interacts with host coagulation factor X/F10 (activated). Interacts with host coagulation factor XII/F12 (activated). Interacts with host coagulation factor IX/F9 (activated). Interacts with host plasmin/PLG. Interacts with host protein C/PROC (activated). In terms of tissue distribution, saliva (at protein level). Salivary gland. Midgut. Low-level expression in ovary.

The protein localises to the secreted. Serine protease inhibitor that modulates blood feeding of ticks on vertebrate species. Inhibits the intrinsic and common pathways of blood coagulation in the host. Inhibits host thrombin, factor VIIa, factor Xa, factor XIa, factor XIIa, plasmin and activated protein C. Inhibits host trypsin and kallikrein. Reduces host complement activity. Does not affect proliferation of CD4+ T-cells and neutrophil migration. The chain is Iripin-8 from Ixodes ricinus (Common tick).